The following is a 372-amino-acid chain: DNA replication and repair protein RecF (372 aa).

30 to 37 (GENGQGKT) lines the ATP pocket.

This sequence belongs to the RecF family.

It is found in the cytoplasm. Functionally, the RecF protein is involved in DNA metabolism; it is required for DNA replication and normal SOS inducibility. RecF binds preferentially to single-stranded, linear DNA. It also seems to bind ATP. This Anaeromyxobacter sp. (strain K) protein is DNA replication and repair protein RecF.